We begin with the raw amino-acid sequence, 273 residues long: Patr class II histocompatibility antigen, DO beta chain (273 aa).

Positions 1-26 (MGSGWVPWVVALLVNLTRLDSSMTQG) are cleaved as a signal peptide. Positions 27–120 (TDSPEDFVIQ…LGAPFTVGRK (94 aa)) are beta-1. Topologically, residues 27–224 (TDSPEDFVIQ…RAQSEYSWKK (198 aa)) are extracellular. Disulfide bonds link Cys-41/Cys-105 and Cys-143/Cys-199. Residue Asn-45 is glycosylated (N-linked (GlcNAc...) asparagine). A beta-2 region spans residues 121–214 (VQPEVTVYPE…SLLSPVSVEW (94 aa)). The Ig-like C1-type domain occupies 123–213 (PEVTVYPERT…SSLLSPVSVE (91 aa)). Residues 215 to 224 (RAQSEYSWKK) are connecting peptide. A helical transmembrane segment spans residues 225–245 (MLSGIAAFLLGLIFLLVGIVI). Residues 246–273 (QLRAQKGYVRTQMSGNEVSRAVLLPQSC) lie on the Cytoplasmic side of the membrane.

It belongs to the MHC class II family. Heterodimer of an alpha chain (DOA) and a beta chain (DOB). Forms a heterotetrameric complex with an HLA-DM molecule during intracellular transport in endosomal/lysosomal compartments in B-cells.

The protein localises to the endosome membrane. It localises to the lysosome membrane. In terms of biological role, important modulator in the HLA class II restricted antigen presentation pathway by interaction with the HLA-DM molecule in B-cells. Modifies peptide exchange activity of HLA-DM. This is Patr class II histocompatibility antigen, DO beta chain (Patr-DOB) from Pan troglodytes (Chimpanzee).